A 244-amino-acid chain; its full sequence is tRNA (guanine-N(7)-)-methyltransferase (244 aa).

Residues 1–24 (MTDSHVPHPESPAVEEGEERPHRR) form a disordered region. The S-adenosyl-L-methionine site is built by Glu74, Glu99, Asp126, and Asp149. Residue Asp149 is part of the active site. Substrate-binding positions include Lys153, Asp185, and 222 to 225 (TKFE).

Belongs to the class I-like SAM-binding methyltransferase superfamily. TrmB family.

The enzyme catalyses guanosine(46) in tRNA + S-adenosyl-L-methionine = N(7)-methylguanosine(46) in tRNA + S-adenosyl-L-homocysteine. It functions in the pathway tRNA modification; N(7)-methylguanine-tRNA biosynthesis. Its function is as follows. Catalyzes the formation of N(7)-methylguanine at position 46 (m7G46) in tRNA. The polypeptide is tRNA (guanine-N(7)-)-methyltransferase (Pseudomonas syringae pv. syringae (strain B728a)).